A 469-amino-acid chain; its full sequence is 3-isopropylmalate dehydratase large subunit (469 aa).

[4Fe-4S] cluster-binding residues include cysteine 347, cysteine 407, and cysteine 410. Over residues 424–441 (SASSSNRNFKGRQGSPSG) the composition is skewed to polar residues. The tract at residues 424-443 (SASSSNRNFKGRQGSPSGRT) is disordered.

The protein belongs to the aconitase/IPM isomerase family. LeuC type 1 subfamily. Heterodimer of LeuC and LeuD. [4Fe-4S] cluster serves as cofactor.

The enzyme catalyses (2R,3S)-3-isopropylmalate = (2S)-2-isopropylmalate. The protein operates within amino-acid biosynthesis; L-leucine biosynthesis; L-leucine from 3-methyl-2-oxobutanoate: step 2/4. Its function is as follows. Catalyzes the isomerization between 2-isopropylmalate and 3-isopropylmalate, via the formation of 2-isopropylmaleate. This Prochlorococcus marinus (strain MIT 9312) protein is 3-isopropylmalate dehydratase large subunit.